A 353-amino-acid polypeptide reads, in one-letter code: Photosystem II protein D1 (353 aa).

Thr-2 is modified (N-acetylthreonine). The residue at position 2 (Thr-2) is a Phosphothreonine. The next 3 helical transmembrane spans lie at 29 to 46 (YIGWFGVLMIPTLLTATS), 118 to 133 (HFLLGVACYMGREWEL), and 142 to 156 (WIAVAYSAPVAAATA). His-118 lines the chlorophyll a pocket. Tyr-126 is a binding site for pheophytin a. 2 residues coordinate [CaMn4O5] cluster: Asp-170 and Glu-189. A helical membrane pass occupies residues 197–218 (FHMLGVAGVFGGSLFSAMHGSL). His-198 provides a ligand contact to chlorophyll a. A quinone contacts are provided by residues His-215 and 264–265 (SF). Fe cation is bound at residue His-215. His-272 contributes to the Fe cation binding site. Residues 274 to 288 (FLAAWPVVGIWFTAL) form a helical membrane-spanning segment. Positions 332, 333, 342, and 344 each coordinate [CaMn4O5] cluster. A propeptide spanning residues 345 to 353 (ALEVPYLNG) is cleaved from the precursor.

This sequence belongs to the reaction center PufL/M/PsbA/D family. PSII is composed of 1 copy each of membrane proteins PsbA, PsbB, PsbC, PsbD, PsbE, PsbF, PsbH, PsbI, PsbJ, PsbK, PsbL, PsbM, PsbT, PsbX, PsbY, PsbZ, Psb30/Ycf12, at least 3 peripheral proteins of the oxygen-evolving complex and a large number of cofactors. It forms dimeric complexes. It depends on The D1/D2 heterodimer binds P680, chlorophylls that are the primary electron donor of PSII, and subsequent electron acceptors. It shares a non-heme iron and each subunit binds pheophytin, quinone, additional chlorophylls, carotenoids and lipids. D1 provides most of the ligands for the Mn4-Ca-O5 cluster of the oxygen-evolving complex (OEC). There is also a Cl(-1) ion associated with D1 and D2, which is required for oxygen evolution. The PSII complex binds additional chlorophylls, carotenoids and specific lipids. as a cofactor. In terms of processing, phosphorylated in both bundle sheath and mesophyll cells, phosphorylation increases when cells are grown under high rather than low light regimes (70 vs 900 umol photons/m-2/s). Post-translationally, PSII is subject to light-induced damage, in particular to D1. Damaged protein is degraded by Deg1 and FtsH proteases and replaced. In maize mesophyll cells D1 degradation is less extensive in grana (stacked) vs stroma (unstacked) lamellae, in part due to exclusion of FtsH from the grana. D1 degradation is faster in bundle sheath cells. Tyr-161 forms a radical intermediate that is referred to as redox-active TyrZ, YZ or Y-Z. In terms of processing, C-terminally processed by CTPA; processing is essential to allow assembly of the oxygen-evolving complex and thus photosynthetic growth.

The protein localises to the plastid. The protein resides in the chloroplast thylakoid membrane. It catalyses the reaction 2 a plastoquinone + 4 hnu + 2 H2O = 2 a plastoquinol + O2. In terms of biological role, photosystem II (PSII) is a light-driven water:plastoquinone oxidoreductase that uses light energy to abstract electrons from H(2)O, generating O(2) and a proton gradient subsequently used for ATP formation. It consists of a core antenna complex that captures photons, and an electron transfer chain that converts photonic excitation into a charge separation. The D1/D2 (PsbA/PsbD) reaction center heterodimer binds P680, the primary electron donor of PSII as well as several subsequent electron acceptors. In Zea mays (Maize), this protein is Photosystem II protein D1.